We begin with the raw amino-acid sequence, 405 residues long: Diaminopimelate decarboxylase (405 aa).

The residue at position 46 (Lys-46) is an N6-(pyridoxal phosphate)lysine. Pyridoxal 5'-phosphate-binding positions include Gly-225 and Glu-259 to Arg-262. The substrate site is built by Arg-262, Arg-298, and Tyr-302. The active-site Proton donor is Cys-329. Substrate-binding residues include Glu-330 and Tyr-358. Tyr-358 lines the pyridoxal 5'-phosphate pocket.

The protein belongs to the Orn/Lys/Arg decarboxylase class-II family. LysA subfamily. In terms of assembly, homodimer. Pyridoxal 5'-phosphate serves as cofactor.

The catalysed reaction is meso-2,6-diaminopimelate + H(+) = L-lysine + CO2. It functions in the pathway amino-acid biosynthesis; L-lysine biosynthesis via DAP pathway; L-lysine from DL-2,6-diaminopimelate: step 1/1. Functionally, specifically catalyzes the decarboxylation of meso-diaminopimelate (meso-DAP) to L-lysine. The polypeptide is Diaminopimelate decarboxylase (Helicobacter pylori (strain J99 / ATCC 700824) (Campylobacter pylori J99)).